Consider the following 888-residue polypeptide: Alanine--tRNA ligase (888 aa).

Zn(2+)-binding residues include His564, His568, Cys676, and His680.

This sequence belongs to the class-II aminoacyl-tRNA synthetase family. Zn(2+) serves as cofactor.

Its subcellular location is the cytoplasm. It catalyses the reaction tRNA(Ala) + L-alanine + ATP = L-alanyl-tRNA(Ala) + AMP + diphosphate. Catalyzes the attachment of alanine to tRNA(Ala) in a two-step reaction: alanine is first activated by ATP to form Ala-AMP and then transferred to the acceptor end of tRNA(Ala). Also edits incorrectly charged Ser-tRNA(Ala) and Gly-tRNA(Ala) via its editing domain. This Bartonella quintana (strain Toulouse) (Rochalimaea quintana) protein is Alanine--tRNA ligase.